The sequence spans 330 residues: Aspartate--ammonia ligase (330 aa).

Belongs to the class-II aminoacyl-tRNA synthetase family. AsnA subfamily.

The protein localises to the cytoplasm. It carries out the reaction L-aspartate + NH4(+) + ATP = L-asparagine + AMP + diphosphate + H(+). It functions in the pathway amino-acid biosynthesis; L-asparagine biosynthesis; L-asparagine from L-aspartate (ammonia route): step 1/1. This Yersinia enterocolitica serotype O:8 / biotype 1B (strain NCTC 13174 / 8081) protein is Aspartate--ammonia ligase.